Consider the following 151-residue polypeptide: 3-dehydroquinate dehydratase (151 aa).

Tyrosine 26 acts as the Proton acceptor in catalysis. Positions 77, 83, and 90 each coordinate substrate. The Proton donor role is filled by histidine 103. Substrate contacts are provided by residues 104 to 105 and arginine 114; that span reads LS.

Belongs to the type-II 3-dehydroquinase family. As to quaternary structure, homododecamer.

It carries out the reaction 3-dehydroquinate = 3-dehydroshikimate + H2O. It participates in metabolic intermediate biosynthesis; chorismate biosynthesis; chorismate from D-erythrose 4-phosphate and phosphoenolpyruvate: step 3/7. Catalyzes a trans-dehydration via an enolate intermediate. This chain is 3-dehydroquinate dehydratase, found in Pelodictyon phaeoclathratiforme (strain DSM 5477 / BU-1).